Here is a 694-residue protein sequence, read N- to C-terminus: LMBR1 domain-containing protein 2 homolog (694 aa).

The Extracellular segment spans residues 1 to 3 (MAY). The helical transmembrane segment at 4 to 26 (LLSFGIVAALFLASISLYRYGNI) threads the bilayer. The Cytoplasmic portion of the chain corresponds to 27 to 30 (PRQH). Residues 31-51 (ILVTLSVLTAWCFSFLIVFTI) form a helical membrane-spanning segment. Residues 52-106 (PLDVTSTLYRQCVEEHRPTPAPNVTNTSSATVGPPPQCQEPWGMVPASVFPNLWR) lie on the Extracellular side of the membrane. 2 N-linked (GlcNAc...) asparagine glycosylation sites follow: N74 and N77. A helical membrane pass occupies residues 107-127 (IIYWSSQFLTWLIMPLMQSYL). Topologically, residues 128–144 (KAGDFTVKGKLKSALIE) are cytoplasmic. The chain crosses the membrane as a helical span at residues 145–165 (NAIYYGSYLFICGVLLIYIAV). Topologically, residues 166 to 181 (KGESLDWQKLKAIASS) are extracellular. The chain crosses the membrane as a helical span at residues 182 to 202 (ASNTWGLFLLILLLGYALVEV). Topologically, residues 203-381 (PRSLWNNAKP…ECLLKAPFLK (179 aa)) are cytoplasmic. Residues 222-249 (KAAKLSTEKAEAEEHVDDILESLQGLSR) adopt a coiled-coil conformation. Residues 382–402 (TMCVLTATMSAMVVWSELTFF) form a helical membrane-spanning segment. Residues 403–426 (SRHPVLSIFANVIYVAKESYDFFT) are Extracellular-facing. The helical transmembrane segment at 427 to 447 (IEVFSMVVLCYFFYCTYSTIL) threads the bilayer. At 448–467 (RIRFLNLYYLAPHHQTNEHS) the chain is on the cytoplasmic side. A helical transmembrane segment spans residues 468-488 (LIFSGMLLCRLTPPMCLNFLG). Residues 489 to 514 (LIHMDTHIIPNRIMETVYTQIMGHMD) lie on the Extracellular side of the membrane. The chain crosses the membrane as a helical span at residues 515 to 535 (VIGIISNGFNIYFPMCMLAFC). The Cytoplasmic segment spans residues 536-694 (LATWFSLGSR…PPPRGLFDDV (159 aa)). Positions 564–592 (ELVQEGKDLIAREKRRRQRAEEAMARRRD) form a coiled coil. Residues 673 to 694 (DYEAETDGRIVGPPPRGLFDDV) form a disordered region.

Belongs to the LIMR family.

The protein localises to the membrane. The polypeptide is LMBR1 domain-containing protein 2 homolog (Drosophila melanogaster (Fruit fly)).